The following is a 70-amino-acid chain: DNA gyrase inhibitor YacG (70 aa).

Zn(2+)-binding residues include C21, C24, C36, and C40.

It belongs to the DNA gyrase inhibitor YacG family. In terms of assembly, interacts with GyrB. The cofactor is Zn(2+).

Its function is as follows. Inhibits all the catalytic activities of DNA gyrase by preventing its interaction with DNA. Acts by binding directly to the C-terminal domain of GyrB, which probably disrupts DNA binding by the gyrase. In Rhizobium meliloti (strain 1021) (Ensifer meliloti), this protein is DNA gyrase inhibitor YacG.